Consider the following 91-residue polypeptide: Putative regulatory protein PTH_1796 (91 aa).

Belongs to the RemA family.

The polypeptide is Putative regulatory protein PTH_1796 (Pelotomaculum thermopropionicum (strain DSM 13744 / JCM 10971 / SI)).